A 242-amino-acid polypeptide reads, in one-letter code: Murein peptide amidase A (242 aa).

Positions 1–234 (MTVTRPRAER…FAMANLLRWH (234 aa)) constitute a Peptidase M14 domain. H49, E52, and H157 together coordinate Zn(2+). E210 acts as the Proton donor/acceptor in catalysis.

It belongs to the peptidase M14 family. As to quaternary structure, homodimer. Zn(2+) is required as a cofactor.

Its subcellular location is the cytoplasm. The enzyme catalyses L-alanyl-gamma-D-glutamyl-meso-2,6-diaminopimelate + H2O = L-alanyl-D-glutamate + meso-2,6-diaminopimelate. Its pathway is cell wall degradation; peptidoglycan degradation. Involved in muropeptide degradation. Catalyzes the hydrolysis of the gamma-D-glutamyl-diaminopimelic acid (gamma-D-Glu-Dap) amide bond in the murein tripeptide L-alanyl-gamma-D-glutamyl-meso-diaminopimelic acid, leading to the formation of L-Ala-gamma-D-Glu and Dap. The polypeptide is Murein peptide amidase A (Escherichia coli O157:H7).